The primary structure comprises 123 residues: MASLNIIYFMRLYGIPSEDRAEEIANNIKEGEWVFVDRQENKKEFLSAEEAREKFKELINQVRSWKEQMSTLSKYAIFIFVDDTQNPKAIKVYDTSSLGCSTSLVPERWRLYRKEMEGEFNDN.

The stretch at 36–76 (VDRQENKKEFLSAEEAREKFKELINQVRSWKEQMSTLSKYA) forms a coiled coil.

This is an uncharacterized protein from Aquifex aeolicus (strain VF5).